A 106-amino-acid polypeptide reads, in one-letter code: UPF0145 protein Cthe_0398 (106 aa).

Belongs to the UPF0145 family.

This is UPF0145 protein Cthe_0398 from Acetivibrio thermocellus (strain ATCC 27405 / DSM 1237 / JCM 9322 / NBRC 103400 / NCIMB 10682 / NRRL B-4536 / VPI 7372) (Clostridium thermocellum).